A 522-amino-acid polypeptide reads, in one-letter code: Probable G-protein coupled receptor egl-47 (522 aa).

7 helical membrane-spanning segments follow: residues 140–160 (IIKLILYVNYIVLAVLLNSFL), 184–204 (ASMITATKPVINVFVIVLSAI), 238–258 (FVFFFTLLIIFFSALILKVVE), 276–296 (FILVPVLSLWNIIPLLYYHLY), 345–365 (PLLLFSLAWSLLVLCLTLYFL), 398–418 (ICWAAYQVVMAILHIIIICST), and 472–492 (LERTTFFTLISVIVTYSLLLF).

Belongs to the G-protein coupled receptor family. As to expression, expressed in some neurons in the head, the HSN neurons and the PVQ interneurons of the tail.

The protein localises to the membrane. Orphan receptor. Regulates egg-laying probably by activating guanine nucleotide-binding protein goa-1, in the hermaphrodite-specific neurons (HSNs). The sequence is that of Probable G-protein coupled receptor egl-47 from Caenorhabditis elegans.